The following is a 155-amino-acid chain: Small ribosomal subunit protein uS7 (155 aa).

This sequence belongs to the universal ribosomal protein uS7 family. As to quaternary structure, part of the 30S ribosomal subunit. Contacts proteins S9 and S11.

Its function is as follows. One of the primary rRNA binding proteins, it binds directly to 16S rRNA where it nucleates assembly of the head domain of the 30S subunit. Is located at the subunit interface close to the decoding center, probably blocks exit of the E-site tRNA. The protein is Small ribosomal subunit protein uS7 of Sulfurimonas denitrificans (strain ATCC 33889 / DSM 1251) (Thiomicrospira denitrificans (strain ATCC 33889 / DSM 1251)).